The chain runs to 274 residues: Diaminopimelate epimerase (274 aa).

2 residues coordinate substrate: Asn-11 and Asn-76. The Proton donor role is filled by Cys-85. Substrate-binding positions include 86–87, Asn-157, Asn-189, and 207–208; these read GN and ER. Cys-216 serves as the catalytic Proton acceptor. Substrate is bound at residue 217-218; the sequence is GT.

Belongs to the diaminopimelate epimerase family. Homodimer.

It localises to the cytoplasm. The catalysed reaction is (2S,6S)-2,6-diaminopimelate = meso-2,6-diaminopimelate. It participates in amino-acid biosynthesis; L-lysine biosynthesis via DAP pathway; DL-2,6-diaminopimelate from LL-2,6-diaminopimelate: step 1/1. Catalyzes the stereoinversion of LL-2,6-diaminopimelate (L,L-DAP) to meso-diaminopimelate (meso-DAP), a precursor of L-lysine and an essential component of the bacterial peptidoglycan. The chain is Diaminopimelate epimerase from Thermobifida fusca (strain YX).